The primary structure comprises 2185 residues: MGAQVSTQKTGAHETSLSAAGNSVIHYTNINYYKDAASNSANRQDFTQDPGKFTEPVKDIMVKSMPALNSPSAEECGYSDRVRSITLGNSTITTQECANVVVGYGVWPTYLKDEEATAEDQPTQPDVATCRFYTLESVMWQQSSPGWWWKFPDALSNMGLFGQNMQYHYLGRAGYTIHVQCNASKFHQGCLLVVCVPEAEMGCATLANKPDPKSLSKGEIANMFESQNSTGETAVQANVINAGMGVGVGNLTIFPHQWINLRTNNSATIVMPYINSVPMDNMFRHNNFTLMVIPFAPLSYSTGATTYVPITVTVAPMCAEYNGLRLAGKQGLPTLSTPGSNQFLTSDDFQSPSAMPQFDVTPEMDIPGQVNNLMEIAEVDSVVPVNNTEGKVMSIEAYQIPVQSNPTNGSQVFGFPLTPGANSVLNRTLLGEILNYYAHWSGSIKLTFMFCGSAMATGKFLLAYSPPGAGAPTTRKEAMLGTHVIWDVGLQSSCVLCIPWISQTHYRYVVMDEYTAGGYITCWYQTNIVVPADAQSDCKILCFVSACNDFSVRMLKDTPFIKQDNFFQGPPGEVMGRAIARVADTIGSGPVNSESIPALTAAETGHTSQVVPSDTMQTRHVKNYHSRSESTVENFLCRSACVFYTTYKNHDSDGDNFAYWVINTRQVAQLRRKLEMFTYARFDLELTFVITSTQEQPTVRGQDAPVLTHQIMYVPPGGPVPTKVNSYSWQTSTNPSVFWTEGSAPPRMSIPFIGIGNAYSMFYDGWARFDKQGTYGISTLNNMGTLYMRHVNDGGPGPIVSTVRIYFKPKHVKTWVPRPPRLCQYQKAGNVNFEPTGVTEGRTDITTMKTTGAFGQQSGAVYVGNYRVVNRHLATRADWQNCVWEDYNRDLLVSTTTAHGCDTIARCDCTAGVYFCASRNKHYPVTFEGPGLVEVQESEYYPKKYQSHVLLAAGFAEPGDCGGILRCQHGVIGIVTVGGEGVVGFADVRDLLWLEDDAMEQGVRDYVEQLGNCFGSGFTNQICEQVTLLKESLIGQDSILEKSLKALVKIVSALVIVVRNHDDLITVTATLALIGCTTSPWRWLKQKVSQYYGIPMAERQNSGWLKKFTEMTNACKGMEWIAIKIQKFIEWLKVKILPEVKEKHEFLNRLKQLPLLESQIATIEQSAPSQSDQEQLFSNVQYFAHYCRKYAPLYAAEAKRVFSLEKKMSNYIQFKSKCRIEPVCLLLHGSPGAGKSVATNLIGRSLAEKLNSSVYSLPPDPDHFDGYKQQAVVIMDDLCQNPDGKDVSLFCQMVSSVDFVPPMAALEEKGILFTSPFVLASTNAGSVNAPTVSDSRALVRRFHFDMNIEVVSMYSQNGKINMPMAVKTCDEECCPVNFKKCCPLVCGKAIQFIDRRTQVRYSLDMLVTEMFREYNHRHSVGATLEALFQGPPVYREIKISVAPETPPPPAVADLLKSVDSEAVREYCKEKGWLIPEVDSTLQIEKHVNRAFICLQALTTFVSVAGIIYIIYKLFAGFQGAYTGMPNQKPRVPTLRQAKVQGPAFEFAVAMMKRNASTVKTEYGEFTMLGIYDRWAVLPRHAKPGPTILMNDQVVGVLDAKELVDKDGTNLELTLLKLNRNEKFRDIRGFLAREEVEVNEAVLAINTSKFPNMYIPVGRVTDYGFLNLGGTPTKRMLMYNFPTRAGQCGGVLMSTGKVLGIHVGGNGHQGFSAALLRHYFNEEQGEIEFIESSKDAGFPVINTPSKTKLEPSVFHHVFEGNKEPAVLRNGDPRLKANFEEAIFSKYIGNVNTHVDEYMMEAVDHYAGQLATLDISTEPMKLEDAVYGTEGLEALDLTTSAGYPYVALGIKKRDILSKKTRDLTKLKECMDKYGLNLPMVTYVKDELRSADKVAKGKSRLIEASSLNDSVAMRQTFGNLYKTFHLNPGIVTGSAVGCDPDVFWSKIPVMLDGHLIAFDYSGYDASLSPVWFTCLKLLLEKLGYTNKETNYIDYLCNSHHLYRDKHYFVRGGMPSGCSGTSIFNSMINNIIIRTLMLKVYKGIDLDQFRMIAYGDDVIASYPWPIDASLLAEAGKDYGLIMTPADKGECFNEVTWTNVTFLKRYFRADEQYPFLVHPVMPMKDIHESIRWTKDPKNTQDHVRSLCLLAWHNGEHEYEEFIRKIRSVRVGRCLSLPAFSTLRRKWLDSF.

Residue Gly2 is the site of N-myristoyl glycine; by host attachment. Topologically, residues 2–1495 (GAQVSTQKTG…HVNRAFICLQ (1494 aa)) are cytoplasmic. The tract at residues 566–582 (FFQGPPGEVMGRAIARV) is amphipathic alpha-helix. Catalysis depends on for protease 2A activity residues His872 and Asp890. Cys907 and Cys909 together coordinate Zn(2+). Residue Cys961 is the For protease 2A activity of the active site. Zn(2+) is bound by residues Cys967 and His969. A membrane-binding region spans residues 1101 to 1173 (NSGWLKKFTE…EQSAPSQSDQ (73 aa)). Positions 1101–1239 (NSGWLKKFTE…SPGAGKSVAT (139 aa)) are oligomerization. Positions 1122 to 1126 (AIKIQ) are RNA-binding. In terms of domain architecture, SF3 helicase spans 1205–1361 (EKKMSNYIQF…SMYSQNGKIN (157 aa)). Residues Cys1369, Cys1381, and Cys1386 each contribute to the Zn(2+) site. The C4-type; degenerate zinc-finger motif lies at 1369-1386 (CDEECCPVNFKKCCPLVC). Residues 1413–1420 (EYNHRHSV) form an RNA-binding region. The oligomerization stretch occupies residues 1424 to 1429 (LEALFQ). An intramembrane segment occupies 1496–1511 (ALTTFVSVAGIIYIIY). Topologically, residues 1512-2185 (KLFAGFQGAY…TLRRKWLDSF (674 aa)) are cytoplasmic. Position 1521 is an O-(5'-phospho-RNA)-tyrosine (Tyr1521). The region spanning 1541 to 1719 (GPAFEFAVAM…FSAALLRHYF (179 aa)) is the Peptidase C3 domain. Active-site for protease 3C activity residues include His1580, Glu1611, and Cys1687. The 117-residue stretch at 1950–2066 (GHLIAFDYSG…SYPWPIDASL (117 aa)) folds into the RdRp catalytic domain. Positions 1956 and 2052 each coordinate Mg(2+).

The protein belongs to the picornaviruses polyprotein family. Interacts with capsid protein VP1 and capsid protein VP3 to form heterotrimeric protomers. As to quaternary structure, interacts with capsid protein VP0, and capsid protein VP3 to form heterotrimeric protomers. Five protomers subsequently associate to form pentamers which serve as building blocks for the capsid. Interacts with capsid protein VP2, capsid protein VP3 and capsid protein VP4 following cleavage of capsid protein VP0. Interacts with host CXADR. In terms of assembly, interacts with capsid protein VP1 and capsid protein VP3 in the mature capsid. Interacts with capsid protein VP0 and capsid protein VP1 to form heterotrimeric protomers. Five protomers subsequently associate to form pentamers which serve as building blocks for the capsid. Interacts with capsid protein VP4 in the mature capsid. Interacts with protein 2C; this interaction may be important for virion morphogenesis. As to quaternary structure, interacts with capsid protein VP1 and capsid protein VP3. In terms of assembly, homodimer. Homohexamer; forms a hexameric ring structure with 6-fold symmetry characteristic of AAA+ ATPases. Interacts (via N-terminus) with host RTN3 (via reticulon domain); this interaction is important for viral replication. Interacts with capsid protein VP3; this interaction may be important for virion morphogenesis. As to quaternary structure, interacts with protein 3CD. In terms of assembly, homodimer. Interacts with host GBF1. Interacts (via GOLD domain) with host ACBD3 (via GOLD domain); this interaction allows the formation of a viral protein 3A/ACBD3 heterotetramer with a 2:2 stoichiometry, which will stimulate the recruitment of host PI4KB in order to synthesize PI4P at the viral RNA replication sites. Interacts with RNA-directed RNA polymerase. As to quaternary structure, interacts with protein 3AB and with RNA-directed RNA polymerase. In terms of assembly, interacts with Viral protein genome-linked and with protein 3CD. Requires Mg(2+) as cofactor. In terms of processing, specific enzymatic cleavages in vivo by the viral proteases yield processing intermediates and the mature proteins. Myristoylation is required for the formation of pentamers during virus assembly. Further assembly of 12 pentamers and a molecule of genomic RNA generates the provirion. Post-translationally, during virion maturation, immature virions are rendered infectious following cleavage of VP0 into VP4 and VP2. This maturation seems to be an autocatalytic event triggered by the presence of RNA in the capsid and it is followed by a conformational change infectious virion. In terms of processing, myristoylation is required during RNA encapsidation and formation of the mature virus particle. VPg is uridylylated by the polymerase into VPg-pUpU. This acts as a nucleotide-peptide primer for the genomic RNA replication.

It is found in the virion. Its subcellular location is the host cytoplasm. The protein localises to the host cytoplasmic vesicle membrane. It localises to the host nucleus. The enzyme catalyses a ribonucleoside 5'-triphosphate + H2O = a ribonucleoside 5'-diphosphate + phosphate + H(+). It carries out the reaction Selective cleavage of Tyr-|-Gly bond in the picornavirus polyprotein.. It catalyses the reaction RNA(n) + a ribonucleoside 5'-triphosphate = RNA(n+1) + diphosphate. The catalysed reaction is Selective cleavage of Gln-|-Gly bond in the poliovirus polyprotein. In other picornavirus reactions Glu may be substituted for Gln, and Ser or Thr for Gly.. With respect to regulation, replication or transcription is subject to high level of random mutations by the nucleotide analog ribavirin. Its function is as follows. Forms an icosahedral capsid of pseudo T=3 symmetry with capsid proteins VP2 and VP3. The capsid is 300 Angstroms in diameter, composed of 60 copies of each capsid protein and enclosing the viral positive strand RNA genome. Capsid protein VP1 mainly forms the vertices of the capsid. Capsid protein VP1 interacts with host CXADR to provide virion attachment to target host cells. This attachment induces virion internalization. Tyrosine kinases are probably involved in the entry process. After binding to its receptor, the capsid undergoes conformational changes. Capsid protein VP1 N-terminus (that contains an amphipathic alpha-helix) and capsid protein VP4 are externalized. Together, they shape a pore in the host membrane through which viral genome is translocated to host cell cytoplasm. Forms an icosahedral capsid of pseudo T=3 symmetry with capsid proteins VP2 and VP3. The capsid is 300 Angstroms in diameter, composed of 60 copies of each capsid protein and enclosing the viral positive strand RNA genome. Functionally, lies on the inner surface of the capsid shell. After binding to the host receptor, the capsid undergoes conformational changes. Capsid protein VP4 is released, Capsid protein VP1 N-terminus is externalized, and together, they shape a pore in the host membrane through which the viral genome is translocated into the host cell cytoplasm. In terms of biological role, component of immature procapsids, which is cleaved into capsid proteins VP4 and VP2 after maturation. Allows the capsid to remain inactive before the maturation step. Its function is as follows. Cysteine protease that cleaves viral polyprotein and specific host proteins. It is responsible for the autocatalytic cleavage between the P1 and P2 regions, which is the first cleavage occurring in the polyprotein. Also cleaves the host translation initiation factor EIF4G1, in order to shut down the capped cellular mRNA translation. Inhibits the host nucleus-cytoplasm protein and RNA trafficking by cleaving host members of the nuclear pores. Counteracts stress granule formation probably by antagonizing its assembly or promoting its dissassembly. Plays an essential role in the virus replication cycle by acting as a viroporin. Creates a pore in the host endoplasmic reticulum and as a consequence releases Ca2+ in the cytoplasm of infected cell. In turn, high levels of cytoplasmic calcium may trigger membrane trafficking and transport of viral ER-associated proteins to viroplasms, sites of viral genome replication. Functionally, induces and associates with structural rearrangements of intracellular membranes. Displays RNA-binding, nucleotide binding and NTPase activities. May play a role in virion morphogenesis and viral RNA encapsidation by interacting with the capsid protein VP3. In terms of biological role, localizes the viral replication complex to the surface of membranous vesicles. Together with protein 3CD binds the Cis-Active RNA Element (CRE) which is involved in RNA synthesis initiation. Acts as a cofactor to stimulate the activity of 3D polymerase, maybe through a nucleid acid chaperone activity. Its function is as follows. Localizes the viral replication complex to the surface of membranous vesicles. It inhibits host cell endoplasmic reticulum-to-Golgi apparatus transport and causes the disassembly of the Golgi complex, possibly through GBF1 interaction. This would result in depletion of MHC, trail receptors and IFN receptors at the host cell surface. Plays an essential role in viral RNA replication by recruiting ACBD3 and PI4KB at the viral replication sites, thereby allowing the formation of the rearranged membranous structures where viral replication takes place. Acts as a primer for viral RNA replication and remains covalently bound to viral genomic RNA. VPg is uridylylated prior to priming replication into VPg-pUpU. The oriI viral genomic sequence may act as a template for this. The VPg-pUpU is then used as primer on the genomic RNA poly(A) by the RNA-dependent RNA polymerase to replicate the viral genome. During genome replication, the VPg-RNA linkage is removed by the host TDP2, thereby accelerating replication. During the late stage of the replication cycle, host TDP2 is excluded from sites of viral RNA synthesis and encapsidation, allowing for the generation of progeny virions. Functionally, involved in the viral replication complex and viral polypeptide maturation. It exhibits protease activity with a specificity and catalytic efficiency that is different from protease 3C. Protein 3CD lacks polymerase activity. Protein 3CD binds to the 5'UTR of the viral genome. In terms of biological role, replicates the viral genomic RNA on the surface of intracellular membranes. May form linear arrays of subunits that propagate along a strong head-to-tail interaction called interface-I. Covalently attaches UMP to a tyrosine of VPg, which is used to prime RNA synthesis. The positive stranded RNA genome is first replicated at virus induced membranous vesicles, creating a dsRNA genomic replication form. This dsRNA is then used as template to synthesize positive stranded RNA genomes. ss(+)RNA genomes are either translated, replicated or encapsidated. Its function is as follows. Major viral protease that mediates proteolytic processing of the polyprotein. Cleaves host EIF5B, contributing to host translation shutoff. Also cleaves host PABPC1, contributing to host translation shutoff. Cleaves host NLRP1, triggers host N-glycine-mediated degradation of the autoinhibitory NLRP1 N-terminal fragment. The chain is Genome polyprotein from Sus scrofa (Pig).